A 306-amino-acid polypeptide reads, in one-letter code: 4-hydroxy-tetrahydrodipicolinate synthase (306 aa).

Thr46 serves as a coordination point for pyruvate. Tyr134 (proton donor/acceptor) is an active-site residue. Lys162 functions as the Schiff-base intermediate with substrate in the catalytic mechanism. Residue Val204 coordinates pyruvate.

This sequence belongs to the DapA family. Homotetramer; dimer of dimers.

It is found in the cytoplasm. It carries out the reaction L-aspartate 4-semialdehyde + pyruvate = (2S,4S)-4-hydroxy-2,3,4,5-tetrahydrodipicolinate + H2O + H(+). The protein operates within amino-acid biosynthesis; L-lysine biosynthesis via DAP pathway; (S)-tetrahydrodipicolinate from L-aspartate: step 3/4. In terms of biological role, catalyzes the condensation of (S)-aspartate-beta-semialdehyde [(S)-ASA] and pyruvate to 4-hydroxy-tetrahydrodipicolinate (HTPA). This is 4-hydroxy-tetrahydrodipicolinate synthase from Synechococcus sp. (strain JA-2-3B'a(2-13)) (Cyanobacteria bacterium Yellowstone B-Prime).